A 340-amino-acid chain; its full sequence is Ketol-acid reductoisomerase (NADP(+)) (340 aa).

The 180-residue stretch at 3–182 folds into the KARI N-terminal Rossmann domain; sequence VQMEYEKDVK…GAARVGLLET (180 aa). NADP(+)-binding positions include 26 to 29, Arg-49, Ser-53, and 83 to 86; these read YGSQ and DEIQ. His-108 is a catalytic residue. Gly-134 is an NADP(+) binding site. One can recognise a KARI C-terminal knotted domain in the interval 183-328; sequence TYKEETEEDL…AELRKAMPFV (146 aa). Mg(2+) is bound by residues Asp-191, Glu-195, Glu-227, and Glu-231. A substrate-binding site is contributed by Ser-252.

Belongs to the ketol-acid reductoisomerase family. It depends on Mg(2+) as a cofactor.

The catalysed reaction is (2R)-2,3-dihydroxy-3-methylbutanoate + NADP(+) = (2S)-2-acetolactate + NADPH + H(+). It catalyses the reaction (2R,3R)-2,3-dihydroxy-3-methylpentanoate + NADP(+) = (S)-2-ethyl-2-hydroxy-3-oxobutanoate + NADPH + H(+). The protein operates within amino-acid biosynthesis; L-isoleucine biosynthesis; L-isoleucine from 2-oxobutanoate: step 2/4. Its pathway is amino-acid biosynthesis; L-valine biosynthesis; L-valine from pyruvate: step 2/4. In terms of biological role, involved in the biosynthesis of branched-chain amino acids (BCAA). Catalyzes an alkyl-migration followed by a ketol-acid reduction of (S)-2-acetolactate (S2AL) to yield (R)-2,3-dihydroxy-isovalerate. In the isomerase reaction, S2AL is rearranged via a Mg-dependent methyl migration to produce 3-hydroxy-3-methyl-2-ketobutyrate (HMKB). In the reductase reaction, this 2-ketoacid undergoes a metal-dependent reduction by NADPH to yield (R)-2,3-dihydroxy-isovalerate. This chain is Ketol-acid reductoisomerase (NADP(+)), found in Streptococcus thermophilus (strain ATCC BAA-491 / LMD-9).